Consider the following 364-residue polypeptide: Phenylalanine dehydrogenase (364 aa).

Position 62 (R62) interacts with NAD(+). Residue K86 participates in L-phenylalanine binding. The active-site Proton donor/acceptor is K98. Residues D133, S164, T168, 255 to 256, and 276 to 278 each bind NAD(+); these read AM and AAN. N278 lines the L-phenylalanine pocket.

Belongs to the Glu/Leu/Phe/Val dehydrogenases family.

It carries out the reaction L-phenylalanine + NAD(+) + H2O = 3-phenylpyruvate + NH4(+) + NADH + H(+). It functions in the pathway amino-acid biosynthesis; L-phenylalanine biosynthesis; L-phenylalanine from phenylpyruvate (PDH route): step 1/1. Functionally, catalyzes the reversible NAD(+)-dependent oxidative deamination of L-phenylalanine to phenylpyruvate. The polypeptide is Phenylalanine dehydrogenase (Rhodococcus jostii (strain RHA1)).